Reading from the N-terminus, the 489-residue chain is Ammonium transporter Rh type C (489 aa).

The Cytoplasmic segment spans residues 1–21 (MGNCADCLRGFFCPPKNTNIR). The helical transmembrane segment at 22–42 (ISLPAVCFVWQIAMIVLFGVF) threads the bilayer. The Extracellular portion of the chain corresponds to 43-75 (IRYDAESDIRLWLQLKHTNNITSDIENDFYFRY). The N-linked (GlcNAc...) asparagine glycan is linked to N62. The chain crosses the membrane as a helical span at residues 76–96 (PSFQDVHVMIFVGFGFLMTFL). At 97–100 (KRYS) the chain is on the cytoplasmic side. A helical membrane pass occupies residues 101–121 (FGGVGFNFLIGAFGLQWALLM). The Extracellular portion of the chain corresponds to 122 to 140 (QGWFHALDPTTGKISIGVE). Residues 141 to 161 (GLINADFCVAASLIAYGALLG) form a helical membrane-spanning segment. Topologically, residues 162 to 169 (KVSPVQLM) are cytoplasmic. The chain crosses the membrane as a helical span at residues 170-190 (VVTLFGVTLFAVEEYIILNLL). At 191-195 (HCRDA) the chain is on the extracellular side. Residues 196–216 (GGSMVIHCFGGYYGLTISWIL) form a helical membrane-spanning segment. Over 217 to 235 (YRPKLHQSKRLNGSVYHSD) the chain is Cytoplasmic. Residues 236–256 (VFAMIGTLFLWMFWPSFNSAI) form a helical membrane-spanning segment. The Extracellular portion of the chain corresponds to 257-266 (TDHGSGQHRT). Residues 267 to 287 (AINTYIALASSVLTTVAISSA) traverse the membrane as a helical segment. Residues 288-298 (SEKRGKLDMVH) lie on the Cytoplasmic side of the membrane. A helical transmembrane segment spans residues 299–319 (IQNATLAGGVAMGTAAEFMIT). Position 320 (P320) is a topological domain, extracellular. Residues 321–341 (YGALIVGFCTGIISTFGYLFV) traverse the membrane as a helical segment. Over 342–359 (SPFMEKYLKIQDTCGVHN) the chain is Cytoplasmic. A helical membrane pass occupies residues 360-380 (LHAMPGMLGGFIGAIVAAAAT). Residues 381–412 (EEVYSREGLIETFDFEGKFADRTVGTQGGFQA) lie on the Extracellular side of the membrane. The helical transmembrane segment at 413–433 (AGVCVAIAFAVVGGAVVGLIL) threads the bilayer. The Cytoplasmic segment spans residues 434–489 (RLPIWGDPADDNCFDDEVYWEVPEDEEGILPVLEYNNHMTHKHQDISESNFSVEQS).

The protein belongs to the ammonium transporter (TC 2.A.49) family. Rh subfamily. In terms of assembly, homotrimer.

It localises to the apical cell membrane. Functions as an ammonia transporter. May play a role in the elimination of ammonia in the gill. This chain is Ammonium transporter Rh type C (rhcg), found in Gasterosteus aculeatus (Three-spined stickleback).